The chain runs to 253 residues: MRKPIIAGNWKMNKTLGEAVSFVEEVKSSIPAADKAEAVVCAPALFLEKLASAVKGTDLKVGAQNMHFEESGAFTGEISPVALKDLGVDYCVIGHSERREMFAETDETVNKKAHAAFKHGIVPIICVGETLEEREAGKTNDLVADQVKKGLAGLSEEQVAASVIAYEPIWAIGTGKSSTAKDANDVCAHIRKTVAESFSQEAADKLRIQYGGSVKPANIKEYMAESDIDGALVGGASLEPQSFVQLLEEGQYE.

9–11 contacts substrate; that stretch reads NWK. The Electrophile role is filled by histidine 95. Glutamate 167 acts as the Proton acceptor in catalysis. Residues glycine 173, serine 213, and 234–235 contribute to the substrate site; that span reads GG. The residue at position 213 (serine 213) is a Phosphoserine.

The protein belongs to the triosephosphate isomerase family. As to quaternary structure, homodimer.

It is found in the cytoplasm. The catalysed reaction is D-glyceraldehyde 3-phosphate = dihydroxyacetone phosphate. It participates in carbohydrate biosynthesis; gluconeogenesis. It functions in the pathway carbohydrate degradation; glycolysis; D-glyceraldehyde 3-phosphate from glycerone phosphate: step 1/1. Functionally, involved in the gluconeogenesis. Catalyzes stereospecifically the conversion of dihydroxyacetone phosphate (DHAP) to D-glyceraldehyde-3-phosphate (G3P). This chain is Triosephosphate isomerase, found in Bacillus subtilis (strain 168).